Consider the following 430-residue polypeptide: Adenosylhomocysteinase (430 aa).

Substrate-binding residues include Thr-56, Asp-131, and Glu-156. Position 157 to 159 (157 to 159) interacts with NAD(+); sequence TTT. Residues Lys-186 and Asp-190 each coordinate substrate. NAD(+) is bound by residues Asn-191, 220-225, Glu-243, Asn-278, 299-301, and Asn-344; these read GFGDVG and IGH.

Belongs to the adenosylhomocysteinase family. NAD(+) is required as a cofactor.

Its subcellular location is the cytoplasm. It catalyses the reaction S-adenosyl-L-homocysteine + H2O = L-homocysteine + adenosine. Its pathway is amino-acid biosynthesis; L-homocysteine biosynthesis; L-homocysteine from S-adenosyl-L-homocysteine: step 1/1. Functionally, may play a key role in the regulation of the intracellular concentration of adenosylhomocysteine. This Halorhodospira halophila (strain DSM 244 / SL1) (Ectothiorhodospira halophila (strain DSM 244 / SL1)) protein is Adenosylhomocysteinase.